The primary structure comprises 171 residues: Calcium-binding protein F-like (171 aa).

EF-hand domains follow at residues 6 to 41 (KIFE…KMNG), 57 to 80 (IDMD…KAKK), 89 to 124 (AALA…RGYT), and 130 to 159 (DQYL…RRID). Residues Asp-19, Asn-21, Asp-23, Ser-25, and Asp-30 each coordinate Ca(2+). Ca(2+) contacts are provided by Asp-102, Asp-104, Asp-106, Lys-108, Glu-113, Asp-137, Asp-139, Asp-141, Cys-143, and Glu-148.

In Dictyostelium discoideum (Social amoeba), this protein is Calcium-binding protein F-like (cbp12).